The following is a 431-amino-acid chain: STE20-related kinase adapter protein alpha (431 aa).

Residues Ser-2 and Ser-46 each carry the phosphoserine modification. Residues 69–379 (YELLTVIGKG…ASTLLNHSFF (311 aa)) form the Protein kinase domain. A disordered region spans residues 310–347 (LTMSPSRSVANSGLSDSLTTSTPRPSNGDSPSHPYHRT). Positions 312–339 (MSPSRSVANSGLSDSLTTSTPRPSNGDS) are enriched in polar residues. Thr-329 and Thr-419 each carry phosphothreonine; by LKB1.

The protein belongs to the protein kinase superfamily. STE Ser/Thr protein kinase family. STE20 subfamily. Component of a trimeric complex composed of STK11/LKB1, STRAD (STRADA or STRADB) and CAB39/MO25 (CAB39/MO25alpha or CAB39L/MO25beta): the complex tethers STK11/LKB1 in the cytoplasm and stimulates its catalytic activity.

The protein localises to the nucleus. It is found in the cytoplasm. Pseudokinase which, in complex with CAB39/MO25 (CAB39/MO25alpha or CAB39L/MO25beta), binds to and activates STK11/LKB1. Adopts a closed conformation typical of active protein kinases and binds STK11/LKB1 as a pseudosubstrate, promoting conformational change of STK11/LKB1 in an active conformation. The sequence is that of STE20-related kinase adapter protein alpha (STRADA) from Homo sapiens (Human).